The following is a 357-amino-acid chain: DNA primase small subunit PriS (357 aa).

Residues Asp105, Asp107, and Asp259 contribute to the active site.

Belongs to the eukaryotic-type primase small subunit family. Heterodimer of a small subunit (PriS) and a large subunit (PriL). The cofactor is Mg(2+). Requires Mn(2+) as cofactor.

In terms of biological role, catalytic subunit of DNA primase, an RNA polymerase that catalyzes the synthesis of short RNA molecules used as primers for DNA polymerase during DNA replication. The small subunit contains the primase catalytic core and has DNA synthesis activity on its own. Binding to the large subunit stabilizes and modulates the activity, increasing the rate of DNA synthesis while decreasing the length of the DNA fragments, and conferring RNA synthesis capability. The DNA polymerase activity may enable DNA primase to also catalyze primer extension after primer synthesis. May also play a role in DNA repair. This chain is DNA primase small subunit PriS, found in Methanococcus maripaludis (strain C5 / ATCC BAA-1333).